A 211-amino-acid polypeptide reads, in one-letter code: Histidine biosynthesis bifunctional protein HisIE (211 aa).

The tract at residues 1 to 122 (MSVKAAEVSS…DPQEESQMVW (122 aa)) is phosphoribosyl-AMP cyclohydrolase. A phosphoribosyl-ATP pyrophosphohydrolase region spans residues 123 to 211 (LHQLEQLLAA…VINKLKERHK (89 aa)).

It in the N-terminal section; belongs to the PRA-CH family. In the C-terminal section; belongs to the PRA-PH family.

The protein resides in the cytoplasm. It catalyses the reaction 1-(5-phospho-beta-D-ribosyl)-ATP + H2O = 1-(5-phospho-beta-D-ribosyl)-5'-AMP + diphosphate + H(+). The catalysed reaction is 1-(5-phospho-beta-D-ribosyl)-5'-AMP + H2O = 1-(5-phospho-beta-D-ribosyl)-5-[(5-phospho-beta-D-ribosylamino)methylideneamino]imidazole-4-carboxamide. It functions in the pathway amino-acid biosynthesis; L-histidine biosynthesis; L-histidine from 5-phospho-alpha-D-ribose 1-diphosphate: step 2/9. It participates in amino-acid biosynthesis; L-histidine biosynthesis; L-histidine from 5-phospho-alpha-D-ribose 1-diphosphate: step 3/9. In Vibrio vulnificus (strain YJ016), this protein is Histidine biosynthesis bifunctional protein HisIE.